The following is a 507-amino-acid chain: Probable cyclic di-GMP phosphodiesterase PdeG (507 aa).

The next 2 helical transmembrane spans lie at 4-24 (TLIP…ILNI) and 217-237 (LIDK…AAAF). The EAL domain maps to 246–500 (SATPEEILRR…DLVKIILSKP (255 aa)).

It is found in the cell membrane. The enzyme catalyses 3',3'-c-di-GMP + H2O = 5'-phosphoguanylyl(3'-&gt;5')guanosine + H(+). Its function is as follows. Phosphodiesterase (PDE) that catalyzes the hydrolysis of cyclic-di-GMP (c-di-GMP) to 5'-pGpG. In Escherichia coli (strain K12), this protein is Probable cyclic di-GMP phosphodiesterase PdeG.